The following is a 1057-amino-acid chain: Carbamoyl phosphate synthase large chain (1057 aa).

Positions 1–401 are carboxyphosphate synthetic domain; the sequence is MPKRNDIKTI…SLLKAIRSLE (401 aa). ATP is bound by residues Arg-129, Arg-169, Gly-175, Gly-176, Lys-208, Ile-210, Glu-215, Gly-241, Ile-242, His-243, Gln-284, and Glu-298. Residues 133-327 form the ATP-grasp 1 domain; the sequence is RNLMNELNEP…IAKLAAKIAV (195 aa). Mg(2+)-binding residues include Gln-284, Glu-298, and Asn-300. Positions 284, 298, and 300 each coordinate Mn(2+). Residues 402–546 are oligomerization domain; the sequence is YGVHHLGLPN…YGTYETENES (145 aa). Positions 547–929 are carbamoyl phosphate synthetic domain; sequence IRSDKKKVVV…ALYKGLVASG (383 aa). The ATP-grasp 2 domain maps to 671–861; the sequence is EALMQRIEIP…MANLAMKAIL (191 aa). ATP is bound by residues Arg-707, Arg-746, Leu-748, Glu-752, Gly-777, Val-778, His-779, Ser-780, Gln-820, and Glu-832. Mg(2+)-binding residues include Gln-820, Glu-832, and Asn-834. Positions 820, 832, and 834 each coordinate Mn(2+). The MGS-like domain maps to 930-1057; the sequence is LQVKDHGTVL…ESMTFNMNQM (128 aa). An allosteric domain region spans residues 930-1057; the sequence is LQVKDHGTVL…ESMTFNMNQM (128 aa).

Belongs to the CarB family. Composed of two chains; the small (or glutamine) chain promotes the hydrolysis of glutamine to ammonia, which is used by the large (or ammonia) chain to synthesize carbamoyl phosphate. Tetramer of heterodimers (alpha,beta)4. It depends on Mg(2+) as a cofactor. Mn(2+) is required as a cofactor.

The catalysed reaction is hydrogencarbonate + L-glutamine + 2 ATP + H2O = carbamoyl phosphate + L-glutamate + 2 ADP + phosphate + 2 H(+). It catalyses the reaction hydrogencarbonate + NH4(+) + 2 ATP = carbamoyl phosphate + 2 ADP + phosphate + 2 H(+). It functions in the pathway amino-acid biosynthesis; L-arginine biosynthesis; carbamoyl phosphate from bicarbonate: step 1/1. Its pathway is pyrimidine metabolism; UMP biosynthesis via de novo pathway; (S)-dihydroorotate from bicarbonate: step 1/3. Its function is as follows. Large subunit of the glutamine-dependent carbamoyl phosphate synthetase (CPSase). CPSase catalyzes the formation of carbamoyl phosphate from the ammonia moiety of glutamine, carbonate, and phosphate donated by ATP, constituting the first step of 2 biosynthetic pathways, one leading to arginine and/or urea and the other to pyrimidine nucleotides. The large subunit (synthetase) binds the substrates ammonia (free or transferred from glutamine from the small subunit), hydrogencarbonate and ATP and carries out an ATP-coupled ligase reaction, activating hydrogencarbonate by forming carboxy phosphate which reacts with ammonia to form carbamoyl phosphate. In Macrococcus caseolyticus (strain JCSC5402) (Macrococcoides caseolyticum), this protein is Carbamoyl phosphate synthase large chain.